Reading from the N-terminus, the 193-residue chain is Imidazoleglycerol-phosphate dehydratase (193 aa).

This sequence belongs to the imidazoleglycerol-phosphate dehydratase family.

The protein localises to the cytoplasm. It catalyses the reaction D-erythro-1-(imidazol-4-yl)glycerol 3-phosphate = 3-(imidazol-4-yl)-2-oxopropyl phosphate + H2O. Its pathway is amino-acid biosynthesis; L-histidine biosynthesis; L-histidine from 5-phospho-alpha-D-ribose 1-diphosphate: step 6/9. The protein is Imidazoleglycerol-phosphate dehydratase of Saccharolobus islandicus (strain Y.N.15.51 / Yellowstone #2) (Sulfolobus islandicus).